Consider the following 394-residue polypeptide: MNGNRFGRLFEVTTYGESHGPGMGVVVSGCPAGVALDERMIQDELDRRKPGQSMITTSRGEPDEVSIQSGLQDGYTTGTPIGMTIENKDAESGKYEPFVTAPRPSHGDYTYSAKFGTRNWGGGGRSSARETVNWVAAGAVAKAVLAQSDHDVRVKAHVNQIGEIEAPDVSFEDIREHSEDNEVRCADPETAERMRALIDDYQERGDSIGGSIYFEARGVPRGLGAPRFDSVPARLGQALFAIPATTSVEFGLGRDARSVAGKQRNEDWTVADGDEDHVVADEGDPIPAGNDHGGLQGGITTGEPIYGEASWHAPTSIPKTQATVDWETGEEKAVTVTGRHDPSLPPRAVPVVEAMLYCTILDFMLLGGRINPDRLDGHPGQYDTDYHPSSPRNE.

Position 48 (Arg48) interacts with NADP(+). The interval 52-90 (QSMITTSRGEPDEVSIQSGLQDGYTTGTPIGMTIENKDA) is disordered. The segment covering 66 to 79 (SIQSGLQDGYTTGT) has biased composition (polar residues). FMN contacts are provided by residues 125-127 (RSS), Gly297, 312-316 (HAPTS), and Arg339.

The protein belongs to the chorismate synthase family. FMNH2 serves as cofactor.

It carries out the reaction 5-O-(1-carboxyvinyl)-3-phosphoshikimate = chorismate + phosphate. It functions in the pathway metabolic intermediate biosynthesis; chorismate biosynthesis; chorismate from D-erythrose 4-phosphate and phosphoenolpyruvate: step 7/7. In terms of biological role, catalyzes the anti-1,4-elimination of the C-3 phosphate and the C-6 proR hydrogen from 5-enolpyruvylshikimate-3-phosphate (EPSP) to yield chorismate, which is the branch point compound that serves as the starting substrate for the three terminal pathways of aromatic amino acid biosynthesis. This reaction introduces a second double bond into the aromatic ring system. The protein is Chorismate synthase of Halobacterium salinarum (strain ATCC 700922 / JCM 11081 / NRC-1) (Halobacterium halobium).